A 223-amino-acid chain; its full sequence is Golgi SNAP receptor complex member 1 (223 aa).

Position 2 is an N-acetylserine (Ser-2). The Cytoplasmic portion of the chain corresponds to 2-204 (SSQPSFVTIR…MKINTRRKKN (203 aa)). Residue Ser-164 is modified to Phosphoserine. The helical; Anchor for type IV membrane protein transmembrane segment at 205–222 (AFVLATITTLCILFLFFT) threads the bilayer. Trp-223 is a topological domain (vesicular).

The protein belongs to the GOSR1 family. As to quaternary structure, component of several multiprotein Golgi SNARE complexes. Identified in a Golgi SNARE complex consisting of t-SNARES SED5, YKT6, and the v-SNARE SFT1. Interacts with BET1. Interacts with BOS1. Interacts with SEC22. Interacts with PEP12. Interacts with self.

It localises to the golgi apparatus membrane. Involved in transport from the ER to the Golgi apparatus as well as in intra-Golgi transport. It belongs to a super-family of proteins called t-SNAREs or soluble NSF (N-ethylmaleimide-sensitive factor) attachment protein receptor. Rescues alpha-factor maturation defects. This Saccharomyces cerevisiae (strain ATCC 204508 / S288c) (Baker's yeast) protein is Golgi SNAP receptor complex member 1 (GOS1).